We begin with the raw amino-acid sequence, 171 residues long: Moubatin (171 aa).

The N-terminal stretch at 1–15 (MMLVLTTLIFSFSAS) is a signal peptide. 3 cysteine pairs are disulfide-bonded: C23/C144, C55/C166, and C118/C145.

This sequence belongs to the calycin superfamily. Lipocalin family. Post-translationally, the N-terminus is blocked. In terms of tissue distribution, expressed in salivary glands.

The protein localises to the secreted. In terms of biological role, tick salivary platelet aggregation inhibitor that plays an important part in the anti-hemostatic strategy of ticks. Acts by scavenging thromboxane A2 (TXA2), a potent inducer of platelet aggregation and blood vessel constriction. As a consequence, is a specific inhibitor of collagen-induced platelet aggregation. In addition, it also acts as a potent inhibitor of TXA2-mediated vasoconstriction. Has also been found to bind leukotriene B4 (LTB4) (which also derives from arachidonic acid, as TXA2) with affinities in the nanomolar range. It does not interact with complement protein C5. This Ornithodoros moubata (Soft tick) protein is Moubatin.